Reading from the N-terminus, the 212-residue chain is Ribosomal RNA small subunit methyltransferase G (212 aa).

S-adenosyl-L-methionine is bound by residues G73, F78, 124–125 (IE), and R137.

The protein belongs to the methyltransferase superfamily. RNA methyltransferase RsmG family.

It localises to the cytoplasm. Its function is as follows. Specifically methylates the N7 position of a guanine in 16S rRNA. The chain is Ribosomal RNA small subunit methyltransferase G from Karelsulcia muelleri (strain GWSS) (Sulcia muelleri).